Consider the following 241-residue polypeptide: Demethylmenaquinone methyltransferase (241 aa).

Residues Thr60, Asp81, and 106 to 107 (DA) contribute to the S-adenosyl-L-methionine site.

It belongs to the class I-like SAM-binding methyltransferase superfamily. MenG/UbiE family.

The catalysed reaction is a 2-demethylmenaquinol + S-adenosyl-L-methionine = a menaquinol + S-adenosyl-L-homocysteine + H(+). The protein operates within quinol/quinone metabolism; menaquinone biosynthesis; menaquinol from 1,4-dihydroxy-2-naphthoate: step 2/2. Methyltransferase required for the conversion of demethylmenaquinol (DMKH2) to menaquinol (MKH2). This chain is Demethylmenaquinone methyltransferase, found in Staphylococcus epidermidis (strain ATCC 35984 / DSM 28319 / BCRC 17069 / CCUG 31568 / BM 3577 / RP62A).